Here is a 396-residue protein sequence, read N- to C-terminus: MQTKYDLSTMFIHSGRQKRFSQGSVNPVLQRASSLLFDSIEDKKHATQRRAKGELFYGRRGTLTHFALQDLMCEMEGGAGCYLYPCGTAAVTNSILSFVKTGDHVLMSGAAYEPTQYFCNIVLKKMQIDITYYDPLIGEDIATLIQPNTKVLFLEAPSSITMEIPDIPTIVKAARKVNPNIVIMIDNTWSAGVLFKALEHDIDISIQAGTKYLVGHSDIMIGTAVANARTWDQLREHSYLMGQMVDADSAYTTARGIRTLGVRLKQHQESSIKVAKWLSEQPEVKTVYHPALPSCPGHEFFLRDFSGSSGLFSFELTQRLTSEQVSKFMDHFQLFAMAYSWGGFESLILCNQPEEIAHIRPNIKRNLTGSLIRVHIGFENVDELIADLKAGFERIA.

At Lys211 the chain carries N6-(pyridoxal phosphate)lysine.

Belongs to the trans-sulfuration enzymes family. As to quaternary structure, homotetramer. Pyridoxal 5'-phosphate is required as a cofactor.

It is found in the cytoplasm. It catalyses the reaction L,L-cystathionine + H2O = L-homocysteine + pyruvate + NH4(+). The enzyme catalyses an S-substituted L-cysteine + H2O = a thiol + pyruvate + NH4(+). The protein operates within amino-acid biosynthesis; L-methionine biosynthesis via de novo pathway; L-homocysteine from L-cystathionine: step 1/1. Its function is as follows. Catalyzes the cleavage of cystathionine to homocysteine, pyruvate and ammonia during methionine biosynthesis. This is Cystathionine beta-lyase (metC) from Haemophilus influenzae (strain ATCC 51907 / DSM 11121 / KW20 / Rd).